Reading from the N-terminus, the 829-residue chain is MWHRALGPGWKLLLALALTSLQGARGAEEEPSSDGSFQVVTFKWHHVQDPYIIALWILVASLAKIVFHLSHKVTSIVPESALLIVLGLVLGGIVWAADHIASFTLTPTLFFFYLLPPIVLDAGYFMPNRLFFGNLGTILLYAVIGTIWNAATTGLSLYGVFLSGLMGELKIGLLDFLLFGSLIAAVDPVAVLAVFEEVHVNEVLFIIVFGESLLNDAVTVVLYNVFESFVTLGGDAVTGVDCVKGIVSFFVVSLGGTLVGVIFAFLLSLVTRFTKHVRIIEPGFVFVISYLSYLTSEMLSLSSILAITFCGICCQKYVKANISEQSATTVRYTMKMLASGAETIIFMFLGISAVNPDIWTWNTAFVLLTLVFISVYRAIGVVLQTWILNRYRMVQLETIDQVVMSYGGLRGAVAYALVVLLDEKKVKEKNLFVSTTLIVVFFTVIFQGLTIKPLVQWLKVKRSEHREPKLNEKLHGRAFDHILSAIEDISGQIGHNYLRDKWSNFDRKFLSKVLMRRSAQKSRDRILNVFHELNLKDAISYVAEGERRGSLAFIRSPSTDNMVNVDFNTPRPSTVEASVSYFLRENVSAVCLDMQSLEQRRRSIRDTEDMVTHHTLQQYLYKPRQEYKHLYSRHELTPNEDEKQDKEIFHRTMRKRLESFKSAKLGINQNKKAAKLYKRERAQKRRNSSIPNGKLPMENLAHNYTIKEKDLELSEHEEATNYEEISGGIEFLASVTQDVASDSGAGIDNPVFSPDEDLDPSILSRVPPWLSPGETVVPSQRARVQIPNSPSNFRRLTPFRLSNKSVDSFLQADGHEEQLQPAAPESTHM.

The N-terminal stretch at 1 to 26 (MWHRALGPGWKLLLALALTSLQGARG) is a signal peptide. The Extracellular segment spans residues 27–46 (AEEEPSSDGSFQVVTFKWHH). Residues 47 to 69 (VQDPYIIALWILVASLAKIVFHL) form a helical membrane-spanning segment. Topologically, residues 70–77 (SHKVTSIV) are cytoplasmic. A helical membrane pass occupies residues 78–97 (PESALLIVLGLVLGGIVWAA). Over 98 to 106 (DHIASFTLT) the chain is Extracellular. The chain crosses the membrane as a helical span at residues 107 to 124 (PTLFFFYLLPPIVLDAGY). Residues 125–127 (FMP) lie on the Cytoplasmic side of the membrane. A helical membrane pass occupies residues 128 to 163 (NRLFFGNLGTILLYAVIGTIWNAATTGLSLYGVFLS). A 1,2-diacyl-sn-glycero-3-phospho-(1D-myo-inositol) contacts are provided by glycine 133, glycine 136, and threonine 137. Residues 164-176 (GLMGELKIGLLDF) lie on the Extracellular side of the membrane. A helical membrane pass occupies residues 177–198 (LLFGSLIAAVDPVAVLAVFEEV). Over 199–200 (HV) the chain is Cytoplasmic. The helical transmembrane segment at 201-232 (NEVLFIIVFGESLLNDAVTVVLYNVFESFVTL) threads the bilayer. Residues 233-239 (GGDAVTG) are Extracellular-facing. A helical membrane pass occupies residues 240-274 (VDCVKGIVSFFVVSLGGTLVGVIFAFLLSLVTRFT). At 275–276 (KH) the chain is on the cytoplasmic side. Residues 277-299 (VRIIEPGFVFVISYLSYLTSEML) form a helical membrane-spanning segment. Residues 300–301 (SL) are Extracellular-facing. Residues 302–318 (SSILAITFCGICCQKYV) traverse the membrane as a helical segment. Residues 319-325 (KANISEQ) are Cytoplasmic-facing. The chain crosses the membrane as a helical span at residues 326 to 354 (SATTVRYTMKMLASGAETIIFMFLGISAV). At 355–362 (NPDIWTWN) the chain is on the extracellular side. Residues 363–384 (TAFVLLTLVFISVYRAIGVVLQ) form a helical membrane-spanning segment. The Cytoplasmic segment spans residues 385 to 397 (TWILNRYRMVQLE). A 1,2-diacyl-sn-glycero-3-phospho-(1D-myo-inositol) is bound at residue methionine 393. A helical transmembrane segment spans residues 398 to 421 (TIDQVVMSYGGLRGAVAYALVVLL). Residues 422–428 (DEKKVKE) are Extracellular-facing. A helical membrane pass occupies residues 429-462 (KNLFVSTTLIVVFFTVIFQGLTIKPLVQWLKVKR). At 463–829 (SEHREPKLNE…QPAAPESTHM (367 aa)) the chain is on the cytoplasmic side. Positions 492, 493, and 495 each coordinate a 1,2-diacyl-sn-glycero-3-phospho-(1D-myo-inositol). Phosphoserine is present on residues serine 550 and serine 558. The tract at residues 571–585 (RPSTVEASVSYFLRE) is interaction with EZR. The interval 586 to 663 (NVSAVCLDMQ…RKRLESFKSA (78 aa)) is interaction with NHERF4. The interaction with AHCYL1 stretch occupies residues 587–691 (VSAVCLDMQS…AQKRRNSSIP (105 aa)). Residues serine 588 and serine 603 each carry the phosphoserine modification. Phosphoserine; by SGK1 is present on serine 659. Residues 677-687 (YKRERAQKRRN) are compositionally biased toward basic residues. Residues 677-696 (YKRERAQKRRNSSIPNGKLP) form a disordered region. Phosphoserine occurs at positions 714, 805, and 808.

This sequence belongs to the monovalent cation:proton antiporter 1 (CPA1) transporter (TC 2.A.36) family. Homodimer. Found in the forms of complex and dynamic macromolecular complexes. Binds NHERF1 and NHERF2. Interacts with CHP1; this interaction increases trafficking and activity of SLC9A3 at the plasma membrane. Interacts with CHP2 and SHANK2. Interacts with PDZK1 (via C-terminal PDZ domain). Interacts with NHERF4 and interactions decrease in response to elevated calcium ion levels. Interacts with AHCYL1; the interaction is required for SLC9A3 activity. Interacts with EZR; interaction targets SLC9A3 to the apical membrane. Interacts with SNX27 (via PDZ domains); directs SLC9A3 membrane insertion from early endosomes to the plasma membrane. Post-translationally, phosphorylated by PKA, which inhibits activity. Phosphorylation at Ser-659 by SGK1 is associated with increased abundance at the cell membrane. Phosphorylation at Ser-714 by CSNK2A1 regulates SLC9A3 activity through the formation of multiple signaling complexes.

The protein resides in the apical cell membrane. Its subcellular location is the cell membrane. It is found in the recycling endosome membrane. It localises to the early endosome membrane. The enzyme catalyses Na(+)(in) + H(+)(out) = Na(+)(out) + H(+)(in). Seems to switch between active and inactive modes in response to various stimuli. Activated directly or indirectly by membrane phosphatidylinositol (PIs). Regulated by a variety of auxiliary proteins, which facilitate the maturation, cell surface expression and function of the transporter. Inhibited specifically by the drug tenapanor. Plasma membrane Na(+)/H(+) antiporter. Exchanges intracellular H(+) ions for extracellular Na(+) in 1:1 stoichiometry, playing a key role in salt and fluid absorption and pH homeostasis. Major apical Na(+)/H(+) exchanger in kidney and intestine playing an important role in renal and intestine Na(+) absorption and blood pressure regulation. This Mus musculus (Mouse) protein is Sodium/hydrogen exchanger 3.